The following is a 240-amino-acid chain: MFRRKLQALDYHNPAGFNFKDETEFRNFLVWLEDQKIRHYKIEERGNLRNIHSSEWPAQYEKYLNDVNCPFKVQERQESIDWLLGLAVRLEYGDNAAKYQNAKPYNSDVSKSAEPLINLDVNNPDFKAGVMALANLLQIQRHDDYLMMLKAIRILVQERLSQEAVAKSNSAKEGLPVALDKHILGFDTGDAVLNDAARILRLLHIEELRELQTKINEAIVAVQAIIADPKTDHRLGKVGR.

This sequence belongs to the RTRAF family. Homodimer. Component of a tRNA-splicing ligase complex.

The protein localises to the nucleus. Its subcellular location is the cytoplasm. It is found in the cytosol. The protein resides in the perinuclear region. It localises to the cytoskeleton. The protein localises to the microtubule organizing center. Its subcellular location is the centrosome. RNA-binding protein involved in modulation of mRNA transcription by Polymerase II. Component of the tRNA-splicing ligase complex. This chain is RNA transcription, translation and transport factor protein, found in Xenopus laevis (African clawed frog).